A 267-amino-acid polypeptide reads, in one-letter code: Orotidine 5'-phosphate decarboxylase (267 aa).

Ser2 is subject to N-acetylserine. Residues Asp37, 59–61 (KTH), and 91–100 (DRKFADIGNT) each bind substrate. The Proton donor role is filled by Lys93. Glycyl lysine isopeptide (Lys-Gly) (interchain with G-Cter in ubiquitin) cross-links involve residues Lys93 and Lys209. Substrate-binding residues include Tyr217 and Arg235. Lys253 is covalently cross-linked (Glycyl lysine isopeptide (Lys-Gly) (interchain with G-Cter in ubiquitin)).

This sequence belongs to the OMP decarboxylase family.

The enzyme catalyses orotidine 5'-phosphate + H(+) = UMP + CO2. It participates in pyrimidine metabolism; UMP biosynthesis via de novo pathway; UMP from orotate: step 2/2. The protein is Orotidine 5'-phosphate decarboxylase (URA3) of Saccharomyces cerevisiae (strain ATCC 204508 / S288c) (Baker's yeast).